A 289-amino-acid chain; its full sequence is Formamidopyrimidine-DNA glycosylase (289 aa).

Pro2 serves as the catalytic Schiff-base intermediate with DNA. Catalysis depends on Glu3, which acts as the Proton donor. Lys61 (proton donor; for beta-elimination activity) is an active-site residue. The DNA site is built by His96, Arg115, and Lys161. The FPG-type zinc finger occupies 247-281; it reads SAYGQENLPCPRCGAPIKREKFMNRSSFSCPRCQP. Arg271 functions as the Proton donor; for delta-elimination activity in the catalytic mechanism.

This sequence belongs to the FPG family. Monomer. Zn(2+) is required as a cofactor.

It carries out the reaction Hydrolysis of DNA containing ring-opened 7-methylguanine residues, releasing 2,6-diamino-4-hydroxy-5-(N-methyl)formamidopyrimidine.. The enzyme catalyses 2'-deoxyribonucleotide-(2'-deoxyribose 5'-phosphate)-2'-deoxyribonucleotide-DNA = a 3'-end 2'-deoxyribonucleotide-(2,3-dehydro-2,3-deoxyribose 5'-phosphate)-DNA + a 5'-end 5'-phospho-2'-deoxyribonucleoside-DNA + H(+). Involved in base excision repair of DNA damaged by oxidation or by mutagenic agents. Acts as a DNA glycosylase that recognizes and removes damaged bases. Has a preference for oxidized purines, such as 7,8-dihydro-8-oxoguanine (8-oxoG). Has AP (apurinic/apyrimidinic) lyase activity and introduces nicks in the DNA strand. Cleaves the DNA backbone by beta-delta elimination to generate a single-strand break at the site of the removed base with both 3'- and 5'-phosphates. The polypeptide is Formamidopyrimidine-DNA glycosylase (Rhodococcus erythropolis (strain PR4 / NBRC 100887)).